The following is a 187-amino-acid chain: 5-hmdU DNA kinase (187 aa).

It belongs to the thymidylate kinase family. 5-hmdU DNA kinase subfamily.

It catalyses the reaction 5-hydroxymethyl-dUMP in DNA + ATP = 5-phosphomethyl-dUMP in DNA + ADP + H(+). Functionally, phosphorylates 5-hydroxymethyluracil (5hmdU) into 5-phosphomethyl-2'-deoxyuridine (5-PmdU) on DNA as a step in the pathway leading to thymidine hypermodifications in the viral genome. The phosphate is added internally to the DNA polymer. Also transfers glutamate to 5-pyrophosphoryloxymethyldeoxyuridine (5-PPmdU) to produce 5-Nalpha-glyutamylthymidine (Nalpha-GluT). As a final result of the pathway of hypermodification, 5-aminoethyl-2'-deoxyuridine (5-NedU) substitutes for about 30% of thymidines in the viral DNA. These modifications probably prevent degradation of viral genome by the host restriction-modification antiviral defense system. This is 5-hmdU DNA kinase from Pseudomonas phage M6.